The primary structure comprises 154 residues: Large ribosomal subunit protein uL13 (154 aa).

It belongs to the universal ribosomal protein uL13 family. Part of the 50S ribosomal subunit.

In terms of biological role, this protein is one of the early assembly proteins of the 50S ribosomal subunit, although it is not seen to bind rRNA by itself. It is important during the early stages of 50S assembly. The chain is Large ribosomal subunit protein uL13 from Allorhizobium ampelinum (strain ATCC BAA-846 / DSM 112012 / S4) (Agrobacterium vitis (strain S4)).